Here is a 193-residue protein sequence, read N- to C-terminus: Non-canonical purine NTP pyrophosphatase homolog (193 aa).

This sequence belongs to the HAM1 NTPase family.

The chain is Non-canonical purine NTP pyrophosphatase homolog from Halalkalibacterium halodurans (strain ATCC BAA-125 / DSM 18197 / FERM 7344 / JCM 9153 / C-125) (Bacillus halodurans).